The primary structure comprises 291 residues: m-AAA protease-interacting protein 1, mitochondrial (291 aa).

The N-terminal 96 residues, 1-96 (MALAVRLLPR…TFPSCPRRTY (96 aa)), are a transit peptide targeting the mitochondrion.

As to quaternary structure, interacts with AFG3L2. Interacts with SPG7. Interacts with SMDT1/EMRE (via the N-terminal transit peptide); interaction is direct and takes place before maturation of SMDT1/EMRE.

The protein localises to the mitochondrion matrix. Its function is as follows. Promotes sorting of SMDT1/EMRE in mitochondria by ensuring its maturation. Interacts with the transit peptide region of SMDT1/EMRE precursor protein in the mitochondrial matrix, leading to protect it against protein degradation by YME1L1, thereby ensuring SMDT1/EMRE maturation by the mitochondrial processing peptidase (PMPCA and PMPCB). The protein is m-AAA protease-interacting protein 1, mitochondrial of Bos taurus (Bovine).